We begin with the raw amino-acid sequence, 71 residues long: Plasticin-DA1 (71 aa).

An N-terminal signal peptide occupies residues 1 to 22 (MAFLKKSLFLVLFLALVPLSIC). Positions 23–42 (EAEKREEENEEKQEDDDESE) are excised as a propeptide. Residues 25-45 (EKREEENEEKQEDDDESEKKR) form a disordered region. Positions 30 to 40 (ENEEKQEDDDE) are enriched in acidic residues. Residue G68 is modified to Glycine amide. A propeptide spanning residues 70-71 (ER) is cleaved from the precursor.

Belongs to the frog skin active peptide (FSAP) family. Plasticin subfamily. Expressed by the skin glands.

The protein localises to the secreted. It is found in the target cell membrane. Functionally, neutral peptide with no antimicrobial activity. Does not permeate bacterial membranes. May act in synergy with cationic peptides by enhancing their activity. Has a moderate hemolytic activity. It interacts with zwitterionic phospholipids (DMPC) without perturbing either the interface or inside of the bilayer, whereas it causes little perturbations at the interface peptide-anionic vesicles (DMPG) as well as in the bilayer alkyl chains. The chain is Plasticin-DA1 from Agalychnis dacnicolor (Giant Mexican leaf frog).